We begin with the raw amino-acid sequence, 152 residues long: Protein SprT-like (152 aa).

Residues 7-148 (QRLVEEVSLQ…GKCKGKLILI (142 aa)) form the SprT-like domain. Zn(2+) is bound at residue His-67. The active site involves Glu-68. A Zn(2+)-binding site is contributed by His-71.

Belongs to the SprT family. Requires Zn(2+) as cofactor.

The protein resides in the cytoplasm. This is Protein SprT-like from Bacillus thuringiensis subsp. konkukian (strain 97-27).